A 615-amino-acid polypeptide reads, in one-letter code: MGADRGRGGRRRPARVVAYAVGGVVLLAGCAAMPDSGDLRGVESTPRQDPQVRVFAMPPREDAPPADIVQGFLEALTSDDPHYETARKYLTGDAAKSWRPDESATVLAGGPGTESDHSGNREDANDYSVTLTGTRVATVDAQQSYAPADGVYRESVHLTRDGKSKQWRIDSLPPGVVMGKSDFQRNYMSVNRYYFASNTPVRAAAETGPVREPAAVADPVYVRRRVDPMTQVVRSLLSGPTSLLGPVVRSSFPTGTALAKNAGSLAPDDRSKLTVPLNDKAARAGADKCDEMAAQLLFTLQNLTPAVQEVELRSGGEQLCSLSEDRAETVATRGSAQRPDYLYFVDDQDRLVRIAAGSNGTRAEPVPGPLGEGHQALRSVAVSRDEHSAAGIGLDNKLLYVGSLVSGGSLGDPVLASQGKTESDRLTPPSWDAQGDLWIADRNPADPRLLLLKEGAGDPVEVRTPGLDGRVQAVRVAADGVRIALVVEKDGKRSLLIGRIERDGKAGDVPAVTVLELRSATPELEEVTAMSWAGDARLVVVGRERGGVQQIGYVQVDGSTPEASVPAALTGVKEIAATEDERLPLVAYSEDLIVRLPSGLQWQKVTEGTAPVYPG.

Residues 1–29 (MGADRGRGGRRRPARVVAYAVGGVVLLAG) form the signal peptide. A lipid anchor (N-palmitoyl cysteine) is attached at Cys-30. Cys-30 carries S-diacylglycerol cysteine lipidation. Residues 100–123 (PDESATVLAGGPGTESDHSGNRED) form a disordered region. A compositionally biased stretch (basic and acidic residues) spans 114 to 123 (ESDHSGNRED).

It belongs to the LpqB lipoprotein family.

The protein localises to the cell membrane. This Streptomyces coelicolor (strain ATCC BAA-471 / A3(2) / M145) protein is Lipoprotein LpqB.